Consider the following 98-residue polypeptide: NADH-ubiquinone oxidoreductase chain 4L (98 aa).

3 consecutive transmembrane segments (helical) span residues 1-21, 29-49, and 61-81; these read MPPI…GLLM, SLLC…ILSL, and IILL…LVMI.

It belongs to the complex I subunit 4L family. In terms of assembly, core subunit of respiratory chain NADH dehydrogenase (Complex I) which is composed of 45 different subunits.

Its subcellular location is the mitochondrion inner membrane. It carries out the reaction a ubiquinone + NADH + 5 H(+)(in) = a ubiquinol + NAD(+) + 4 H(+)(out). In terms of biological role, core subunit of the mitochondrial membrane respiratory chain NADH dehydrogenase (Complex I) which catalyzes electron transfer from NADH through the respiratory chain, using ubiquinone as an electron acceptor. Part of the enzyme membrane arm which is embedded in the lipid bilayer and involved in proton translocation. In Galeopterus variegatus (Malayan flying lemur), this protein is NADH-ubiquinone oxidoreductase chain 4L (MT-ND4L).